A 376-amino-acid polypeptide reads, in one-letter code: Cytoplasmic tRNA 2-thiolation protein 1 (376 aa).

This sequence belongs to the TtcA family. CTU1/NCS6/ATPBD3 subfamily.

It is found in the cytoplasm. Its pathway is tRNA modification; 5-methoxycarbonylmethyl-2-thiouridine-tRNA biosynthesis. Functionally, plays a central role in 2-thiolation of mcm(5)S(2)U at tRNA wobble positions of tRNA(Lys), tRNA(Glu) and tRNA(Gln). Directly binds tRNAs and probably acts by catalyzing adenylation of tRNAs, an intermediate required for 2-thiolation. It is unclear whether it acts as a sulfurtransferase that transfers sulfur from thiocarboxylated URM1 onto the uridine of tRNAs at wobble position. Prior mcm(5) tRNA modification by the elongator complex is required for 2-thiolation. May also be involved in protein urmylation. This Scheffersomyces stipitis (strain ATCC 58785 / CBS 6054 / NBRC 10063 / NRRL Y-11545) (Yeast) protein is Cytoplasmic tRNA 2-thiolation protein 1.